Consider the following 343-residue polypeptide: Heat-inducible transcription repressor HrcA (343 aa).

This sequence belongs to the HrcA family.

Negative regulator of class I heat shock genes (grpE-dnaK-dnaJ and groELS operons). Prevents heat-shock induction of these operons. This chain is Heat-inducible transcription repressor HrcA, found in Mycobacterium avium (strain 104).